Reading from the N-terminus, the 38-residue chain is Photosystem II reaction center protein L (38 aa).

The chain crosses the membrane as a helical span at residues 17 to 37; the sequence is SLYWGLLLIFVLAILFSSYIF.

This sequence belongs to the PsbL family. In terms of assembly, PSII is composed of 1 copy each of membrane proteins PsbA, PsbB, PsbC, PsbD, PsbE, PsbF, PsbH, PsbI, PsbJ, PsbK, PsbL, PsbM, PsbT, PsbX, PsbY, PsbZ, Psb30/Ycf12, at least 3 peripheral proteins of the oxygen-evolving complex and a large number of cofactors. It forms dimeric complexes.

It localises to the plastid. Its subcellular location is the chloroplast thylakoid membrane. Functionally, one of the components of the core complex of photosystem II (PSII). PSII is a light-driven water:plastoquinone oxidoreductase that uses light energy to abstract electrons from H(2)O, generating O(2) and a proton gradient subsequently used for ATP formation. It consists of a core antenna complex that captures photons, and an electron transfer chain that converts photonic excitation into a charge separation. This subunit is found at the monomer-monomer interface and is required for correct PSII assembly and/or dimerization. This chain is Photosystem II reaction center protein L, found in Nephroselmis olivacea (Green alga).